The following is a 106-amino-acid chain: MVNVPKTRRTYCKGKECRKHTQHKVTQYKAGKASLFAQGKRRYDRKQKGYGGQTKPVFHKKAKTTKKVVLRLECVVCKTKAQLSLKRCKHFELGGDKKQKGQALQF.

The protein belongs to the eukaryotic ribosomal protein eL42 family.

The sequence is that of Large ribosomal subunit protein eL42 (RPL44) from Debaryomyces hansenii (strain ATCC 36239 / CBS 767 / BCRC 21394 / JCM 1990 / NBRC 0083 / IGC 2968) (Yeast).